A 161-amino-acid chain; its full sequence is Large ribosomal subunit protein uL15 (161 aa).

Residues 1 to 43 (MKLSDIADNAGSRKKRMRIGRGIGSGKGKTGGRGGKGQTARSG) form a disordered region. The segment covering 21 to 37 (RGIGSGKGKTGGRGGKG) has biased composition (gly residues).

Belongs to the universal ribosomal protein uL15 family. In terms of assembly, part of the 50S ribosomal subunit.

In terms of biological role, binds to the 23S rRNA. The sequence is that of Large ribosomal subunit protein uL15 from Nitrobacter hamburgensis (strain DSM 10229 / NCIMB 13809 / X14).